The chain runs to 485 residues: Glucose-6-phosphate 1-dehydrogenase (485 aa).

NADP(+) contacts are provided by residues arginine 46, 89-90 (DI), and lysine 144. 4 residues coordinate substrate: histidine 174, lysine 178, glutamate 212, and aspartate 231. The active-site Proton acceptor is histidine 236. Lysine 334 is a substrate binding site.

It belongs to the glucose-6-phosphate dehydrogenase family.

The enzyme catalyses D-glucose 6-phosphate + NADP(+) = 6-phospho-D-glucono-1,5-lactone + NADPH + H(+). Its pathway is carbohydrate degradation; pentose phosphate pathway; D-ribulose 5-phosphate from D-glucose 6-phosphate (oxidative stage): step 1/3. Catalyzes the oxidation of glucose 6-phosphate to 6-phosphogluconolactone. This is Glucose-6-phosphate 1-dehydrogenase from Zymomonas mobilis subsp. mobilis (strain ATCC 31821 / ZM4 / CP4).